A 392-amino-acid chain; its full sequence is Phosphopentomutase (392 aa).

6 residues coordinate Mn(2+): D13, D286, H291, D327, H328, and H339.

It belongs to the phosphopentomutase family. Mn(2+) is required as a cofactor.

It is found in the cytoplasm. The catalysed reaction is 2-deoxy-alpha-D-ribose 1-phosphate = 2-deoxy-D-ribose 5-phosphate. It carries out the reaction alpha-D-ribose 1-phosphate = D-ribose 5-phosphate. Its pathway is carbohydrate degradation; 2-deoxy-D-ribose 1-phosphate degradation; D-glyceraldehyde 3-phosphate and acetaldehyde from 2-deoxy-alpha-D-ribose 1-phosphate: step 1/2. In terms of biological role, isomerase that catalyzes the conversion of deoxy-ribose 1-phosphate (dRib-1-P) and ribose 1-phosphate (Rib-1-P) to deoxy-ribose 5-phosphate (dRib-5-P) and ribose 5-phosphate (Rib-5-P), respectively. In Oceanobacillus iheyensis (strain DSM 14371 / CIP 107618 / JCM 11309 / KCTC 3954 / HTE831), this protein is Phosphopentomutase.